The chain runs to 540 residues: Amino acid transporter AVT1B (540 aa).

The span at 1–11 shows a compositional bias: polar residues; sequence MNHSTSDQSLY. A disordered region spans residues 1-55; that stretch reads MNHSTSDQSLYIESDDGDDERKHLSDDEDDDGTLSDTSDAYNQNQHHLSKASPYS. Helical transmembrane passes span 155-175, 180-200, 227-247, 273-293, 297-317, 332-352, 367-387, 412-432, 452-474, 478-500, and 511-531; these read AVLN…PYAV, WLGL…GLLL, ILVS…YIIL, LFAL…DLSV, ISAG…WVGL, LATL…HGVF, AVLL…AVMG, IALW…LSPV, IAIR…FFGL, LIGS…LSIL, and ICIL…YSAL.

This sequence belongs to the amino acid/polyamine transporter 2 family. Amino acid/auxin permease (AAAP) (TC 2.A.18.5) subfamily.

The protein resides in the membrane. The sequence is that of Amino acid transporter AVT1B from Arabidopsis thaliana (Mouse-ear cress).